The chain runs to 101 residues: Small ribosomal subunit protein uS14A (101 aa).

The protein belongs to the universal ribosomal protein uS14 family. As to quaternary structure, part of the 30S ribosomal subunit. Contacts proteins S3 and S10.

Its function is as follows. Binds 16S rRNA, required for the assembly of 30S particles and may also be responsible for determining the conformation of the 16S rRNA at the A site. The polypeptide is Small ribosomal subunit protein uS14A (Mycolicibacterium smegmatis (strain ATCC 700084 / mc(2)155) (Mycobacterium smegmatis)).